The following is a 447-amino-acid chain: Na(+)-translocating NADH-quinone reductase subunit A (447 aa).

It belongs to the NqrA family. In terms of assembly, composed of six subunits; NqrA, NqrB, NqrC, NqrD, NqrE and NqrF.

The enzyme catalyses a ubiquinone + n Na(+)(in) + NADH + H(+) = a ubiquinol + n Na(+)(out) + NAD(+). Its function is as follows. NQR complex catalyzes the reduction of ubiquinone-1 to ubiquinol by two successive reactions, coupled with the transport of Na(+) ions from the cytoplasm to the periplasm. NqrA to NqrE are probably involved in the second step, the conversion of ubisemiquinone to ubiquinol. This Hahella chejuensis (strain KCTC 2396) protein is Na(+)-translocating NADH-quinone reductase subunit A.